Here is a 92-residue protein sequence, read N- to C-terminus: MRNYELVYVVKPNSDEEVREAILNKVKEVVATDGEIVKVDTWGTKKLAYPIAKFTEGFYVLVNFKSAVDVPKEIDRNLKINENVIRHMIVVA.

It belongs to the bacterial ribosomal protein bS6 family.

In terms of biological role, binds together with bS18 to 16S ribosomal RNA. The chain is Small ribosomal subunit protein bS6 from Clostridioides difficile (strain 630) (Peptoclostridium difficile).